A 787-amino-acid polypeptide reads, in one-letter code: Vacuolar protein sorting-associated protein 35A (787 aa).

At M1 the chain carries N-acetylmethionine.

The protein belongs to the VPS35 family. Component of the retromer complex which consists of VPS29 (MAG1), VPS26 (VPS26A or VPS26B), VPS35 (VPS35A or VPS35B or VPS35C), VPS5/17 (SNX1 or SNX2A or SNX2B). Component of a retromer subcomplex consisting of VPS29 (MAG1), VPS26 (VPS26A or VPS26B), VPS35 (VPS35A or VPS35B or VPS35C). Interacts with RABG3F.

Its subcellular location is the cytoplasm. It localises to the endosome membrane. The protein localises to the prevacuolar compartment membrane. The protein resides in the golgi apparatus. It is found in the trans-Golgi network membrane. Plays a role in vesicular protein sorting. Component of the membrane-associated retromer complex which is essential in endosome-to-Golgi retrograde transport. Also involved in the efficient sorting of seed storage proteins. Binds alone to endosomal membranes and is required for recruitment of VPS26 and VPS29 to membrane. The VPS29-VPS26-VPS35 subcomplex may be involved in recycling of specific cargos from endosome to the plasma membrane. This chain is Vacuolar protein sorting-associated protein 35A (VPS35A), found in Arabidopsis thaliana (Mouse-ear cress).